The primary structure comprises 128 residues: Ribonuclease P protein component (128 aa).

It belongs to the RnpA family. In terms of assembly, consists of a catalytic RNA component (M1 or rnpB) and a protein subunit.

It carries out the reaction Endonucleolytic cleavage of RNA, removing 5'-extranucleotides from tRNA precursor.. RNaseP catalyzes the removal of the 5'-leader sequence from pre-tRNA to produce the mature 5'-terminus. It can also cleave other RNA substrates such as 4.5S RNA. The protein component plays an auxiliary but essential role in vivo by binding to the 5'-leader sequence and broadening the substrate specificity of the ribozyme. The chain is Ribonuclease P protein component from Prochlorococcus marinus (strain NATL1A).